The following is a 97-amino-acid chain: Co-chaperonin GroES (97 aa).

This sequence belongs to the GroES chaperonin family. Heptamer of 7 subunits arranged in a ring. Interacts with the chaperonin GroEL.

It localises to the cytoplasm. Functionally, together with the chaperonin GroEL, plays an essential role in assisting protein folding. The GroEL-GroES system forms a nano-cage that allows encapsulation of the non-native substrate proteins and provides a physical environment optimized to promote and accelerate protein folding. GroES binds to the apical surface of the GroEL ring, thereby capping the opening of the GroEL channel. This chain is Co-chaperonin GroES, found in Burkholderia cepacia (Pseudomonas cepacia).